We begin with the raw amino-acid sequence, 149 residues long: MNLQNNVLNQIHQILLPTNPTLDKPNAEATKEEFSSAENRDEKDYLTNQQPKNLSTPSTSSNGEFIPHIFYSLHQIRKDPNNLSNQLETLTGSIRHRLKLCKSLISENEDTKDLLSKSPSEWQDIIHQREQELQIKRDVLDDLYRKLQR.

Positions Thr-18–Glu-64 are disordered. Over residues Pro-25–Tyr-45 the composition is skewed to basic and acidic residues. Positions Leu-46–Gly-63 are enriched in polar residues. Short sequence motifs (nuclear localization signal) lie at residues Arg-77–Lys-99 and Lys-136–Arg-149.

It belongs to the Mediator complex subunit 9 family. In terms of assembly, component of the Mediator complex, which is composed of at least 21 subunits that form three structurally distinct submodules. The Mediator head module contains MED6, MED8, MED11, SRB4/MED17, SRB5/MED18, ROX3/MED19, SRB2/MED20 and SRB6/MED22, the middle module contains MED1, MED4, NUT1/MED5, MED7, CSE2/MED9, NUT2/MED10, SRB7/MED21 and SOH1/MED31, and the tail module contains MED2, PGD1/MED3, RGR1/MED14, GAL11/MED15 and SIN4/MED16. The head and the middle modules interact directly with RNA polymerase II, whereas the elongated tail module interacts with gene-specific regulatory proteins. CSE2/MED9 interacts directly with MED4.

It is found in the nucleus. In terms of biological role, component of the Mediator complex, a coactivator involved in the regulated transcription of nearly all RNA polymerase II-dependent genes. Mediator functions as a bridge to convey information from gene-specific regulatory proteins to the basal RNA polymerase II transcription machinery. The Mediator complex, having a compact conformation in its free form, is recruited to promoters by direct interactions with regulatory proteins and serves for the assembly of a functional preinitiation complex with RNA polymerase II and the general transcription factors. The Mediator complex unfolds to an extended conformation and partially surrounds RNA polymerase II, specifically interacting with the unphosphorylated form of the C-terminal domain (CTD) of RNA polymerase II. The Mediator complex dissociates from the RNA polymerase II holoenzyme and stays at the promoter when transcriptional elongation begins. This chain is Mediator of RNA polymerase II transcription subunit 9 (CSE2), found in Saccharomyces cerevisiae (strain ATCC 204508 / S288c) (Baker's yeast).